The following is a 493-amino-acid chain: Neisserial heparin binding antigen (493 aa).

Positions Met-1 to Ala-22 are cleaved as a signal peptide. Residue Cys-23 is the site of N-palmitoyl cysteine attachment. Cys-23 carries the S-diacylglycerol cysteine lipid modification. The interval Gly-27–Asn-206 is disordered. Residues Ser-48–Ala-58 are compositionally biased toward basic and acidic residues. The span at Pro-59–Gln-75 shows a compositional bias: low complexity. Composition is skewed to polar residues over residues Asp-106–Pro-123 and Met-132–Asn-147. A compositionally biased stretch (low complexity) spans Ala-165–Gly-188. The Arg-rich motif signature appears at Arg-301–Ser-311.

Belongs to the NHBA family. The C-terminal beta-barrel forms a monomer. Post-translationally, cleaved in vivo by the Neisserial phase-variable autotransporter/serine protease NalP to give 2 fragments. The N-terminus remains in the cell outer membrane while the C-terminus (beginning on Ser-298) is soluble; this soluble fragment is called C2. Cleaved in vitro by human lactoferrin (LTF, between Arg-310 and Ser-311), this fragment is called C1. Recombinant and cell surface protein is cleaved by human saliva kallikrein (KLK1) between Ser-308 and Arg-309; in saliva kallikrein is more active on NHBA than lactoferrin. Human plasma kallikrein (KLKB1) cleaves in a similar manner to KLK1.

The protein resides in the cell outer membrane. Functionally, a major human immunogenic protein detected in patients recovering from meningitidis, where it induces bactericidal antibodies. Binds human cells, heparin and heparan sulfate proteoglycan in vitro via the Arg-rich motif. Heparin-binding to this protein protects bacteria against killing by bactericidal antibodies (serum killing). The bacteria binds a number of human extracellular sialyated and/or sulfated glycans via this protein, including chondroitin sulfate, heparin and ganglioside GT3. Whole protein binds DNA. Its function is as follows. Plays a role in extracellular-DNA (eDNA) mediated biofilm formation. In some strains (including cc32 strain H44/76 but not cc11 strain B16B6) eDNA stimulates biofilm formation. When NHBA is not processed by NalP, biofilm formation increases. This is probably because the number of positively charged, NHBA- and IgA-derived DNA-binding peptides on the cell surface rises, resulting in increased DNA-binding peptides and increased biofilm formation. The sequence is that of Neisserial heparin binding antigen from Neisseria meningitidis serogroup B / serotype 15 (strain H44/76).